The chain runs to 446 residues: N-succinylarginine dihydrolase (446 aa).

Substrate is bound by residues 19-28 (AGLSYGNVAS), N110, and 137-138 (HR). Residue E174 is part of the active site. Residue R214 coordinates substrate. H250 is a catalytic residue. Residues D252 and N363 each contribute to the substrate site. C369 functions as the Nucleophile in the catalytic mechanism.

Belongs to the succinylarginine dihydrolase family. In terms of assembly, homodimer.

It carries out the reaction N(2)-succinyl-L-arginine + 2 H2O + 2 H(+) = N(2)-succinyl-L-ornithine + 2 NH4(+) + CO2. It participates in amino-acid degradation; L-arginine degradation via AST pathway; L-glutamate and succinate from L-arginine: step 2/5. Functionally, catalyzes the hydrolysis of N(2)-succinylarginine into N(2)-succinylornithine, ammonia and CO(2). The protein is N-succinylarginine dihydrolase of Pseudoalteromonas atlantica (strain T6c / ATCC BAA-1087).